Here is a 104-residue protein sequence, read N- to C-terminus: Large ribosomal subunit protein bL21 (104 aa).

The protein belongs to the bacterial ribosomal protein bL21 family. As to quaternary structure, part of the 50S ribosomal subunit. Contacts protein L20.

In terms of biological role, this protein binds to 23S rRNA in the presence of protein L20. This Pseudomonas putida (strain W619) protein is Large ribosomal subunit protein bL21.